The sequence spans 229 residues: Heptaprenylglyceryl phosphate synthase (229 aa).

Lys-12 is a sn-glycerol 1-phosphate binding site. Mg(2+) is bound by residues Asp-14 and Ser-40. Sn-glycerol 1-phosphate-binding positions include 159–164 (YLEYSG), Gly-189, and 209–210 (GN).

It belongs to the GGGP/HepGP synthase family. Group I subfamily. As to quaternary structure, homodimer. Mg(2+) serves as cofactor.

It catalyses the reaction sn-glycerol 1-phosphate + all-trans-heptaprenyl diphosphate = 3-heptaprenyl-sn-glycero-1-phosphate + diphosphate. Its pathway is membrane lipid metabolism; glycerophospholipid metabolism. Its function is as follows. Prenyltransferase that catalyzes in vivo the transfer of the heptaprenyl moiety of heptaprenyl pyrophosphate (HepPP; 35 carbon atoms) to the C3 hydroxyl of sn-glycerol-1-phosphate (G1P), producing heptaprenylglyceryl phosphate (HepGP). This reaction is an ether-bond-formation step in the biosynthesis of archaea-type G1P-based membrane lipids found in Bacillales. This is Heptaprenylglyceryl phosphate synthase from Bacillus thuringiensis (strain Al Hakam).